We begin with the raw amino-acid sequence, 715 residues long: Polyribonucleotide nucleotidyltransferase (715 aa).

Asp-497 and Asp-503 together coordinate Mg(2+). The 60-residue stretch at 564-623 folds into the KH domain; it reads PRLLTMKIDPEQIGLVIGPGGKTIKSITEQTGSKIDIADDGTVTIAAIQAKKAERARDLI. The region spanning 633 to 701 is the S1 motif domain; that stretch reads GEVYLGRVTR…NKGRLNLTRL (69 aa).

Belongs to the polyribonucleotide nucleotidyltransferase family. It depends on Mg(2+) as a cofactor.

Its subcellular location is the cytoplasm. The enzyme catalyses RNA(n+1) + phosphate = RNA(n) + a ribonucleoside 5'-diphosphate. Involved in mRNA degradation. Catalyzes the phosphorolysis of single-stranded polyribonucleotides processively in the 3'- to 5'-direction. This is Polyribonucleotide nucleotidyltransferase from Crocosphaera subtropica (strain ATCC 51142 / BH68) (Cyanothece sp. (strain ATCC 51142)).